Consider the following 454-residue polypeptide: MDYAAERAPPGVQIYMDVGDPDGWRYCGNDMNIVERDQSANFIIFVTSDINDTDKSFKLRFQEEFRPVLDADINGSFDCHYGCSQSRVWPEGSPESVSSPVMFVVSNIALVSWSCFKIKEVKTAEDYSWKQPTIHVQWNAETGSQIVHVFGFNPDQQSVFMDKLPTAAERKCNPFSLHAAFSRIILQQYDDAFWLLRDLVRHHEKARSKEKKPKRKKSKAEKEHERKIFPLLHDIARHLFHYQETIEVAEHTLQVMAKELLNWRHEDGNNIQQNIGTWLETRRRILHEEKRAHSLKTRSKSLNDRHQNEINLRQAFNLVSQDFGRDARSDSNMMTTVAFVSMVYLPGTFVSGLFGTNFFSFQADPGNTWLTADEFWMYWAVTIPLTLLTLGVWGVWHWWDTYVGWVQKMRDKKAKSTKSDEKDATADRNPEPFNLRQRIRTATRLNEIQRKETV.

2 N-linked (GlcNAc...) asparagine glycosylation sites follow: Asn-51 and Asn-74. Over residues 205 to 219 (KARSKEKKPKRKKSK) the composition is skewed to basic residues. Residues 205-224 (KARSKEKKPKRKKSKAEKEH) are disordered. A run of 2 helical transmembrane segments spans residues 334–354 (MTTV…SGLF) and 375–395 (FWMY…VWGV).

The protein localises to the membrane. In terms of biological role, part of the gene cluster that mediates the biosynthesis of notoamide, a fungal indole alkaloid that belongs to a family of natural products containing a characteristic bicyclo[2.2.2]diazaoctane core. The first step of notoamide biosynthesis involves coupling of L-proline and L-tryptophan by the bimodular NRPS notE', to produce cyclo-L-tryptophan-L-proline called brevianamide F. The reverse prenyltransferase notF' then acts as a deoxybrevianamide E synthase and converts brevianamide F to deoxybrevianamide E via reverse prenylation at C-2 of the indole ring leading to the bicyclo[2.2.2]diazaoctane core. Deoxybrevianamide E is further hydroxylated at C-6 of the indole ring, likely catalyzed by the cytochrome P450 monooxygenase notG', to yield 6-hydroxy-deoxybrevianamide E. 6-hydroxy-deoxybrevianamide E is a specific substrate of the prenyltransferase notC' for normal prenylation at C-7 to produce 6-hydroxy-7-prenyl-deoxybrevianamide, also called notoamide S. As the proposed pivotal branching point in notoamide biosynthesis, notoamide S can be diverted to notoamide E through an oxidative pyran ring closure putatively catalyzed by either notH' cytochrome P450 monooxygenase or the notD' FAD-linked oxidoreductase. This step would be followed by an indole 2,3-epoxidation-initiated pinacol-like rearrangement catalyzed by the notB' FAD-dependent monooxygenase leading to the formation of notoamide C and notoamide D. On the other hand notoamide S is converted to notoamide T by notH' (or notD'), a bifunctional oxidase that also functions as the intramolecular Diels-Alderase responsible for generation of (-)-notoamide T. To generate antipodal (+)-notoaminide T, notH (or notD) in Aspergillus strain MF297-2 is expected to catalyze a Diels-Alder reaction leading to the opposite stereochemistry. The remaining oxidoreductase notD' (or notH') likely catalyzes the oxidative pyran ring formation to yield (-)-stephacidin A. The FAD-dependent monooxygenase notI' is highly similar to notB' and is predicted to catalyze a similar conversion from (-)-stephacidin A to (+)-notoamide B via the 2,3-epoxidation of (-)-stephacidin A followed by a pinacol-type rearrangement. Finally, it remains unclear which enzyme could be responsible for the final hydroxylation steps leading to notoamide A and sclerotiamide. The function of notM' in the notoamide biosynthesis has not been determined yet. In Aspergillus versicolor, this protein is Notoamide biosynthesis cluster protein M'.